The primary structure comprises 582 residues: ATP-dependent lipid A-core flippase (582 aa).

Transmembrane regions (helical) follow at residues 25-45 (WFML…QAGA), 64-84 (VLIV…GQFM), 142-162 (AIIV…FLLW), 165-185 (WKLT…MNIT), and 253-273 (VIVQ…YIHL). An ABC transmembrane type-1 domain is found at 29–309 (VISVIGYALY…LTDVNVKVQR (281 aa)). The ABC transporter domain maps to 342-577 (IDFEGVSFGY…NGLYTQMYRM (236 aa)). 375 to 382 (GRSGAGKS) is an ATP binding site.

This sequence belongs to the ABC transporter superfamily. Lipid exporter (TC 3.A.1.106) family. As to quaternary structure, homodimer.

Its subcellular location is the cell inner membrane. The catalysed reaction is ATP + H2O + lipid A-core oligosaccharideSide 1 = ADP + phosphate + lipid A-core oligosaccharideSide 2.. In terms of biological role, involved in lipopolysaccharide (LPS) biosynthesis. Translocates lipid A-core from the inner to the outer leaflet of the inner membrane. Transmembrane domains (TMD) form a pore in the inner membrane and the ATP-binding domain (NBD) is responsible for energy generation. This Alcanivorax borkumensis (strain ATCC 700651 / DSM 11573 / NCIMB 13689 / SK2) protein is ATP-dependent lipid A-core flippase.